The chain runs to 191 residues: dTTP/UTP pyrophosphatase (191 aa).

Aspartate 71 serves as the catalytic Proton acceptor.

Belongs to the Maf family. YhdE subfamily. Requires a divalent metal cation as cofactor.

Its subcellular location is the cytoplasm. It catalyses the reaction dTTP + H2O = dTMP + diphosphate + H(+). The enzyme catalyses UTP + H2O = UMP + diphosphate + H(+). Its function is as follows. Nucleoside triphosphate pyrophosphatase that hydrolyzes dTTP and UTP. May have a dual role in cell division arrest and in preventing the incorporation of modified nucleotides into cellular nucleic acids. The protein is dTTP/UTP pyrophosphatase of Hyphomonas neptunium (strain ATCC 15444).